The sequence spans 1823 residues: WD repeat-containing protein DDB_G0292056 (1823 aa).

The tract at residues 1–68 is disordered; the sequence is MTYNNNNNYL…IGNSSGGGGV (68 aa). Residues 16–61 show a composition bias toward low complexity; sequence TSTSTSTSTSTPTSTKTSPLNTSSSSNILKSNSRNPSPNNPTNIGN. WD repeat units lie at residues 138–177, 182–222, 228–267, 270–310, 312–354, and 360–405; these read QSKW…YPLL, SHQR…KAVK, SHIL…QELN, VHSA…PKST, ITSN…YSTP, and GHTD…KDLF. Disordered regions lie at residues 418 to 461, 530 to 562, 649 to 687, 714 to 778, 805 to 840, 883 to 940, 966 to 996, 1014 to 1058, and 1122 to 1186; these read PTTT…LLST, QPDD…NNNN, NITE…GFLK, IDIS…YRPG, ILTN…TNDQ, IPNN…SSTS, SSSS…NPPR, NNIT…NDNP, and QQLV…NGKS. 2 stretches are compositionally biased toward low complexity: residues 419–432 and 440–461; these read TTTT…TTTT and LNES…LLST. Low complexity-rich tracts occupy residues 654 to 680 and 717 to 748; these read NNNN…NNNN and SQQQ…QQQQ. Composition is skewed to polar residues over residues 749 to 768 and 827 to 840; these read FLTA…SPTS and MNAS…TNDQ. Low complexity-rich tracts occupy residues 885-926, 966-993, 1014-1041, and 1127-1183; these read NNNK…SSNN, SSSS…KNIN, NNIT…NRLN, and SSSP…NNGN. A WD 7 repeat occupies 1207–1250; sequence ANSYILSGKPVEEICKYNSELAEKENRKDLVKLWNTLGMITDSK. Disordered stretches follow at residues 1264–1307, 1697–1725, and 1764–1823; these read SHFG…LHQS, QQQP…HTHN, and PQQE…MFSN. Over residues 1282–1293 the composition is skewed to low complexity; sequence STGIASSTGSNS. Positions 1710–1725 are enriched in polar residues; the sequence is MSGTSHYHQQQPHTHN.

The sequence is that of WD repeat-containing protein DDB_G0292056 from Dictyostelium discoideum (Social amoeba).